The chain runs to 490 residues: Glycine--tRNA ligase (490 aa).

Residues R99 and E163 each contribute to the substrate site. Residues 195–197 (RNE), 205–210 (FRTREF), 282–283 (EL), and 326–329 (GLTR) contribute to the ATP site. A substrate-binding site is contributed by 210–214 (FEQME). 322–326 (EPAAG) is a substrate binding site. The tract at residues 470–490 (PVEMGGEPWPESGVQEAGGLY) is disordered.

Belongs to the class-II aminoacyl-tRNA synthetase family. In terms of assembly, homodimer.

The protein resides in the cytoplasm. It carries out the reaction tRNA(Gly) + glycine + ATP = glycyl-tRNA(Gly) + AMP + diphosphate. Functionally, catalyzes the attachment of glycine to tRNA(Gly). The chain is Glycine--tRNA ligase from Bifidobacterium longum (strain NCC 2705).